Consider the following 217-residue polypeptide: GTP cyclohydrolase-2 (217 aa).

50–54 (RIHSE) contributes to the GTP binding site. The Zn(2+) site is built by C55, C66, and C68. GTP-binding positions include Q71, 93–95 (EGR), and T115. D127 functions as the Proton acceptor in the catalytic mechanism. Catalysis depends on R129, which acts as the Nucleophile. The GTP site is built by T150 and K155.

Belongs to the GTP cyclohydrolase II family. The cofactor is Zn(2+).

It carries out the reaction GTP + 4 H2O = 2,5-diamino-6-hydroxy-4-(5-phosphoribosylamino)-pyrimidine + formate + 2 phosphate + 3 H(+). Its pathway is cofactor biosynthesis; riboflavin biosynthesis; 5-amino-6-(D-ribitylamino)uracil from GTP: step 1/4. Catalyzes the conversion of GTP to 2,5-diamino-6-ribosylamino-4(3H)-pyrimidinone 5'-phosphate (DARP), formate and pyrophosphate. The sequence is that of GTP cyclohydrolase-2 from Actinobacillus succinogenes (strain ATCC 55618 / DSM 22257 / CCUG 43843 / 130Z).